Consider the following 477-residue polypeptide: Mitochondrial adenyl nucleotide antiporter SLC25A24 (477 aa).

The interval 1 to 173 is regulatory N-terminal domain; it reads MLRWLRDFVL…RFWKHSTGID (173 aa). The Mitochondrial intermembrane segment spans residues 1–197; it reads MLRWLRDFVL…EKKSGQWWRQ (197 aa). EF-hand domains lie at 19–54, 55–88, 86–121, and 122–157; these read EQPTRYETLFQALDRNGDGVVDIGELQEGLRNLGIP, LGQDAEEKIFTTGDVNKDGKLDFEEFMKYLKDHE, DHEKKMKLAFKSLDKNNDGKIEASEIVQSLQTLGLT, and ISEQQAELILQSIDVDGTMTVDWNEWRDYFLFNPVT. Ca(2+) contacts are provided by aspartate 32, asparagine 34, aspartate 36, valine 38, glutamate 43, aspartate 68, asparagine 70, aspartate 72, lysine 74, glutamate 79, aspartate 99, asparagine 101, aspartate 103, lysine 105, glutamate 110, aspartate 135, aspartate 137, threonine 139, threonine 141, and glutamate 146. The linker region stretch occupies residues 159–168; it reads IEEIIRFWKH. The segment at 174 to 477 is C-terminal transmembrane transporter domain; sequence IGDSLTIPDE…MKQTLGVTQK (304 aa). Solcar repeat units lie at residues 192-278, 286-371, and 383-471; these read GQWW…YKKL, IGTF…LKSY, and PGVM…MKQT. A helical membrane pass occupies residues 198–215; sequence LLAGGIAGAVSRTSTAPL. Topologically, residues 216-252 are mitochondrial matrix; the sequence is DRLKIMMQVHGSKSDKMNIFGGFRQMVKEGGIRSLWR. Residues 253–272 form a helical membrane-spanning segment; it reads GNGTNVIKIAPETAVKFWAY. The Mitochondrial intermembrane portion of the chain corresponds to 273–295; that stretch reads EQYKKLLTEEGQKIGTFERFISG. The chain crosses the membrane as a helical span at residues 296–309; the sequence is SMAGATAQTFIYPM. Residues 310–345 are Mitochondrial matrix-facing; it reads EVMKTRLAVGKTGQYSGIYDCAKKILKHEGLGAFYK. At lysine 320 the chain carries N6-acetyllysine; alternate. N6-succinyllysine; alternate is present on lysine 320. Position 336 is an N6-acetyllysine (lysine 336). The chain crosses the membrane as a helical span at residues 346 to 365; the sequence is GYVPNLLGIIPYAGIDLAVY. Residues 366–388 are Mitochondrial intermembrane-facing; it reads ELLKSYWLDNFAKDSVNPGVMVL. Residues 389 to 406 form a helical membrane-spanning segment; that stretch reads LGCGALSSTCGQLASYPL. The Mitochondrial matrix segment spans residues 407–445; that stretch reads ALVRTRMQAQAMLEGSPQLNMVGLFRRIISKEGIPGLYR. Lysine 437 is subject to N6-acetyllysine; alternate. Lysine 437 is modified (N6-succinyllysine; alternate). A helical membrane pass occupies residues 446–465; it reads GITPNFMKVLPAVGISYVVY. The Mitochondrial intermembrane segment spans residues 466–477; the sequence is ENMKQTLGVTQK.

The protein belongs to the mitochondrial carrier (TC 2.A.29) family. As to quaternary structure, monomer. In terms of tissue distribution, expressed in all tissues tested. Highly expressed in testis, expressed at intermediate level in small intestine and pancreas, and weakly expressed in kidney, spleen, liver, skeletal muscle and heart.

It localises to the mitochondrion inner membrane. It catalyses the reaction Mg(2+)(out) + phosphate(in) + ATP(out) = Mg(2+)(in) + phosphate(out) + ATP(in). It carries out the reaction ADP(out) + phosphate(in) + H(+)(out) = ADP(in) + phosphate(out) + H(+)(in). The catalysed reaction is AMP(out) + phosphate(in) = AMP(in) + phosphate(out). The enzyme catalyses phosphate(in) + ATP(out) + 2 H(+)(out) = phosphate(out) + ATP(in) + 2 H(+)(in). It catalyses the reaction dADP(in) + ADP(out) = dADP(out) + ADP(in). It carries out the reaction Mg(2+)(in) + ADP(out) + ATP(in) + H(+)(out) = Mg(2+)(out) + ADP(in) + ATP(out) + H(+)(in). The catalysed reaction is ADP(out) + diphosphate(in) = ADP(in) + diphosphate(out). The enzyme catalyses dAMP(in) + ADP(out) + H(+)(out) = dAMP(out) + ADP(in) + H(+)(in). It catalyses the reaction 3'-AMP(in) + ADP(out) + H(+)(out) = 3'-AMP(out) + ADP(in) + H(+)(in). It carries out the reaction dAMP(out) + phosphate(in) = dAMP(in) + phosphate(out). The catalysed reaction is 3'-AMP(out) + phosphate(in) = 3'-AMP(in) + phosphate(out). The enzyme catalyses dADP(out) + phosphate(in) + H(+)(out) = dADP(in) + phosphate(out) + H(+)(in). Its activity is regulated as follows. Activated by an increase in cytosolic calcium levels that induce a conformational change of the N-terminal regulatory domain, uncapping the channel and allowing transport. Inhibited by bathophenanthroline, mersalyl, p-hydroxymercuribenzoate, bromcresol purple and tannic acid. Functionally, electroneutral antiporter that mediates the transport of adenyl nucleotides through the inner mitochondrial membrane. Originally identified as an ATP-magnesium/inorganic phosphate antiporter, it also acts as a broad specificity adenyl nucleotide antiporter. By regulating the mitochondrial matrix adenyl nucleotide pool could adapt to changing cellular energetic demands and indirectly regulate adenyl nucleotide-dependent metabolic pathways. In vitro, a low activity is also observed with guanyl and pyrimidine nucleotides. May play a role in protecting cells against oxidative stress-induced cell death, by buffering calcium levels in the mitochondrial matrix through the formation of calcium-phosphate precipitates. This chain is Mitochondrial adenyl nucleotide antiporter SLC25A24, found in Homo sapiens (Human).